Here is a 209-residue protein sequence, read N- to C-terminus: MADFYYLPGSSPCRSVIMTAKAVGVELNKKLLNLQAGEHLKPEFLKINPQHTIPTLVDNGFALWESRAIQVYLVEKYGKTDSLYPKCPKKRAVINQRLYFDMGTLYQSFANYYYPQVFAKAPADPEAFKKIEAAFEFLNTFLEGQDYAAGDSLTVADIALVASVSTFEVAGFEISKYANVNKWYENAKKVTPGWEENWAGCLEFKKYFE.

The GST N-terminal domain occupies 1–81 (MADFYYLPGS…YLVEKYGKTD (81 aa)). Glutathione contacts are provided by residues 51–53 (HTI) and 65–67 (ESR). A GST C-terminal domain is found at 87 to 209 (CPKKRAVINQ…GCLEFKKYFE (123 aa)).

It belongs to the GST superfamily. Theta family. As to quaternary structure, homodimer.

It catalyses the reaction RX + glutathione = an S-substituted glutathione + a halide anion + H(+). Functionally, conjugation of reduced glutathione to a wide number of exogenous and endogenous hydrophobic electrophiles. This chain is Glutathione S-transferase 1-1 (GstD1), found in Drosophila yakuba (Fruit fly).